Reading from the N-terminus, the 1102-residue chain is Avirulence protein AvrXa10 (1102 aa).

Disordered regions lie at residues 1 to 68 (MDPI…SAGS) and 127 to 151 (ARPP…PAAQ). The span at 130–140 (PRAKPAPRRRA) shows a compositional bias: basic residues. Residues 141 to 151 (AQPSDASPAAQ) show a composition bias toward low complexity. 15 Core repeat repeats span residues 288 to 321 (LTPD…QAHG), 322 to 355 (LTPD…QAHG), 356 to 389 (LTPD…QDHG), 390 to 423 (LTPD…QDHG), 424 to 457 (LTPD…QDHG), 458 to 491 (LTPD…QDHG), 492 to 525 (LTPD…QTHG), 526 to 559 (LTPD…QDHG), 560 to 593 (LTPD…QAHG), 594 to 627 (LTPD…QDHG), 628 to 661 (LTPD…QDHG), 662 to 695 (LTPA…QDHG), 696 to 729 (LTPV…QDHG), 730 to 763 (LTPV…QDHG), and 764 to 797 (LTPV…QDHG). The stretch at 798–809 (LTPDQVVAIASN) is one Core repeat 15.5 repeat. The short motif at 951–954 (KRVK) is the Nuclear localization sequence A (NLSA) element. Over residues 978–990 (DLDAPSPMHEGDQ) the composition is skewed to basic and acidic residues. The disordered stretch occupies residues 978–1021 (DLDAPSPMHEGDQTRASSRKRSRSDRAVTGPSTQQSFEVRVPEQ). The short motif at 997–1000 (KRSR) is the Nuclear localization sequence B (NLSB) element. Positions 1034-1037 (KRPR) match the Nuclear localization sequence C (NLSC) motif. The segment at 1063–1093 (WEQDAAPFAGAADDFPAFNEEELAWLMELLP) is activation domain.

This sequence belongs to the transcription activator-like effector (TALE) family.

It localises to the secreted. The protein resides in the host nucleus. Functionally, avirulence protein. Induces the hypersensitive response (HR)in rice plants carrying the resistance gene Xa10. Activity depends on the presence of the core repeat domains; replacement with repeat domains from other proteins (AvrBs3 of X.euvesicatoria (AC P14727) or AvrXa7 of this organism) does not elicit the HR. Probably acts as a transcription factor in its host plant (rice) to induce plant resistance or disease. The sequence is that of Avirulence protein AvrXa10 from Xanthomonas oryzae pv. oryzae.